A 619-amino-acid chain; its full sequence is 1-deoxy-D-xylulose-5-phosphate synthase (619 aa).

Thiamine diphosphate-binding positions include His-80 and 121 to 123 (GHS). Position 152 (Asp-152) interacts with Mg(2+). Thiamine diphosphate contacts are provided by residues 153–154 (GA), Asn-181, Tyr-288, and Glu-370. Asn-181 is a binding site for Mg(2+).

It belongs to the transketolase family. DXPS subfamily. Homodimer. Requires Mg(2+) as cofactor. The cofactor is thiamine diphosphate.

The enzyme catalyses D-glyceraldehyde 3-phosphate + pyruvate + H(+) = 1-deoxy-D-xylulose 5-phosphate + CO2. The protein operates within metabolic intermediate biosynthesis; 1-deoxy-D-xylulose 5-phosphate biosynthesis; 1-deoxy-D-xylulose 5-phosphate from D-glyceraldehyde 3-phosphate and pyruvate: step 1/1. Its function is as follows. Catalyzes the acyloin condensation reaction between C atoms 2 and 3 of pyruvate and glyceraldehyde 3-phosphate to yield 1-deoxy-D-xylulose-5-phosphate (DXP). The polypeptide is 1-deoxy-D-xylulose-5-phosphate synthase (Yersinia pseudotuberculosis serotype I (strain IP32953)).